A 360-amino-acid polypeptide reads, in one-letter code: Threonine synthase (360 aa).

At Lys-69 the chain carries N6-(pyridoxal phosphate)lysine. Residues Asn-95, 196–200 (GNAGN), and Thr-326 each bind pyridoxal 5'-phosphate.

It belongs to the threonine synthase family. Homodimer. The cofactor is pyridoxal 5'-phosphate.

It catalyses the reaction O-phospho-L-homoserine + H2O = L-threonine + phosphate. Its pathway is amino-acid biosynthesis; L-threonine biosynthesis; L-threonine from L-aspartate: step 5/5. Catalyzes the gamma-elimination of phosphate from L-phosphohomoserine and the beta-addition of water to produce L-threonine. This Mycobacterium bovis (strain ATCC BAA-935 / AF2122/97) protein is Threonine synthase (thrC).